We begin with the raw amino-acid sequence, 285 residues long: Complex I assembly factor TIMMDC1, mitochondrial (285 aa).

Helical transmembrane passes span 80–100, 137–159, 165–185, and 188–208; these read AALS…FIYA, RWSW…LTVY, LSHF…NLGL, and LVAG…LLMA.

Belongs to the Tim17/Tim22/Tim23 family. Associates with the intermediate 315 kDa subcomplex of incompletely assembled complex I. Interacts with TMEM70.

Its subcellular location is the mitochondrion membrane. Functionally, chaperone protein involved in the assembly of the mitochondrial NADH:ubiquinone oxidoreductase complex (complex I). Participates in constructing the membrane arm of complex I. This Rattus norvegicus (Rat) protein is Complex I assembly factor TIMMDC1, mitochondrial.